Reading from the N-terminus, the 64-residue chain is DNA gyrase inhibitor YacG (64 aa).

Residues cysteine 6, cysteine 9, cysteine 25, and cysteine 29 each contribute to the Zn(2+) site.

It belongs to the DNA gyrase inhibitor YacG family. As to quaternary structure, interacts with GyrB. Zn(2+) serves as cofactor.

Functionally, inhibits all the catalytic activities of DNA gyrase by preventing its interaction with DNA. Acts by binding directly to the C-terminal domain of GyrB, which probably disrupts DNA binding by the gyrase. The protein is DNA gyrase inhibitor YacG of Haemophilus influenzae (strain ATCC 51907 / DSM 11121 / KW20 / Rd).